The primary structure comprises 92 residues: Small ribosomal subunit protein uS19c (92 aa).

This sequence belongs to the universal ribosomal protein uS19 family.

It localises to the plastid. Its subcellular location is the chloroplast. Protein S19 forms a complex with S13 that binds strongly to the 16S ribosomal RNA. This chain is Small ribosomal subunit protein uS19c, found in Dioscorea elephantipes (Elephant's foot yam).